A 186-amino-acid polypeptide reads, in one-letter code: Elongation factor P (186 aa).

The protein belongs to the elongation factor P family.

Its subcellular location is the cytoplasm. It functions in the pathway protein biosynthesis; polypeptide chain elongation. Involved in peptide bond synthesis. Stimulates efficient translation and peptide-bond synthesis on native or reconstituted 70S ribosomes in vitro. Probably functions indirectly by altering the affinity of the ribosome for aminoacyl-tRNA, thus increasing their reactivity as acceptors for peptidyl transferase. The sequence is that of Elongation factor P from Pelagibacter ubique (strain HTCC1062).